Reading from the N-terminus, the 623-residue chain is MSTEHKKQSLSAVTLAAIGVVYGDIGTSPLYTLRECFSGHYGFDVRPDVVFGFLSLIFWMLILIVSVKYLTYVMRADNAGEGGILTLMSLAGRNTSSRATSILVILGLIGGSFFYGEVVITPAISVMSAIEGLEIAAPALDPYIVPCSIAVLTLLFVIQKHGTGSVGKLFAPVMLVWFLTLALLGLRSIIANPEVLAALNPKWAISFFTEYKSVSFFALGAVVLAITGVEALYADMGHFGKFPIRLAWFTVVLPSLVLNYFGQGALLLKNPEAIKNPFFLLAPDWALIPLLILATLATVIASQAVISGVFSLTRQAVRLGYLPPMRIIHTSEMESGQIYIPVINWTLYLAVVLVIVGFERSSNLAAAYGIAVTGTMVITSVLFCTVALKNWHWNRFFVYFLLVALLVIDVPMFSANALKLFSGGWLPLSLGLVMFIIMTTWKSERFSLLRRMHEHGNSLEAMIASLEKSPPVRVPGTAVYMSRAMNVIPFALLHNLKHNKVLHDRVVLLTLRTEDAPYVHNVNRVTIEQLSPTFWRVVASYGWRETPNVEEIFHRCGLEGLPCQMMETSFFMSHESLILTKRPWYLFLRGKLFIALSRNALRAADQFEIPPNRVIELGTQVEI.

12 helical membrane-spanning segments follow: residues 10–30 (LSAV…TSPL), 47–67 (PDVV…IVSV), 102–122 (ILVI…VITP), 138–158 (PALD…LFVI), 166–186 (VGKL…LLGL), 214–234 (VSFF…ALYA), 248–268 (WFTV…ALLL), 277–297 (PFFL…ATLA), 338–358 (IYIP…IVGF), 364–384 (LAAA…VLFC), 396–416 (FFVY…FSAN), and 420–440 (LFSG…IMTT).

This sequence belongs to the HAK/KUP transporter (TC 2.A.72) family.

The protein localises to the cell inner membrane. The catalysed reaction is K(+)(in) + H(+)(in) = K(+)(out) + H(+)(out). In terms of biological role, responsible for the low-affinity transport of potassium into the cell. Likely operates as a K(+):H(+) symporter. The chain is Low affinity potassium transport system protein Kup from Yersinia enterocolitica serotype O:8 / biotype 1B (strain NCTC 13174 / 8081).